A 654-amino-acid polypeptide reads, in one-letter code: Endoplasmic reticulum chaperone BiP (654 aa).

The first 18 residues, 1-18 (MKLSLVAAMLLLLSAARA), serve as a signal peptide directing secretion. The required for interaction with ELAPOR1 stretch occupies residues 1–80 (MKLSLVAAML…EGERLIGDAA (80 aa)). Position 36–39 (36–39 (GTTY)) interacts with ATP. Serine 86 bears the Phosphoserine mark. Residue lysine 96 participates in ATP binding. Lysine 125 carries the post-translational modification N6-acetyllysine. Positions 125–280 (KPYIQVDIGG…KKKTGKDVRK (156 aa)) are nucleotide-binding (NBD). The residue at position 160 (tyrosine 160) is a 3'-nitrotyrosine. At lysine 213 the chain carries N6-acetyllysine. 227–229 (GGT) is a binding site for ATP. At lysine 271 the chain carries N6-acetyllysine. 293-300 (EKAKRALS) contacts ATP. The residue at position 326 (lysine 326) is an N6-acetyllysine. A Glycyl lysine isopeptide (Lys-Gly) (interchain with G-Cter in SUMO2) cross-link involves residue lysine 352. Lysine 353 carries the post-translational modification N6-acetyllysine; alternate. Residue lysine 353 forms a Glycyl lysine isopeptide (Lys-Gly) (interchain with G-Cter in SUMO1); alternate linkage. An ATP-binding site is contributed by 364 to 367 (GSTR). The interval 409–419 (QDTGDLALLDV) is interdomain linker. Residues 420-500 (CPLTLGIETV…PRGVPQIEVT (81 aa)) are substrate-binding (SBD). Lysine 447 bears the N6-succinyllysine mark. Position 492 is an omega-N-methylarginine (arginine 492). O-AMP-threonine; alternate is present on threonine 518. At threonine 518 the chain carries Phosphothreonine; alternate. Lysine 585 carries the N6,N6,N6-trimethyllysine; by METTL21A; in vitro modification. Residue lysine 585 is modified to N6,N6-dimethyllysine; alternate. The residue at position 585 (lysine 585) is an N6-methyllysine; alternate. Residue lysine 591 is modified to N6-methyllysine. The disordered stretch occupies residues 633–654 (KLYGSAGPPPTGEEDTAEKDEL). Threonine 643 and threonine 648 each carry phosphothreonine. Acidic residues predominate over residues 644 to 654 (GEEDTAEKDEL). The short motif at 651 to 654 (KDEL) is the Prevents secretion from ER element.

It belongs to the heat shock protein 70 family. In terms of assembly, monomer and homooligomer; homooligomerization via the interdomain linker inactivates the chaperone activity and acts as a storage of HSPA5/BiP molecules. Interacts with DNAJC1 (via J domain). Component of an EIF2 complex at least composed of CELF1/CUGBP1, CALR, CALR3, EIF2S1, EIF2S2, HSP90B1 and HSPA5. Part of a large chaperone multiprotein complex comprising DNAJB11, HSP90B1, HSPA5, HYOU, PDIA2, PDIA4, PDIA6, PPIB, SDF2L1, UGGT1 and very small amounts of ERP29, but not, or at very low levels, CALR nor CANX. Interacts with TMEM132A and TRIM21. May form a complex with ERLEC1, OS9, SEL1L and SYVN1. Interacts with DNAJC10. Interacts with DNAJB9/ERdj4; leading to recruit HSPA5/BiP to ERN1/IRE1. Interacts with ERN1/IRE1 (via luminal domain); the interaction takes place following interaction with DNAJB9/ERdj4 and leads to inactivate ERN1/IRE1, the interaction also competitively inhibits ERN1 interaction with MANF. Interacts directly with MANF (via SAP domain); the interaction inhibits ATP binding to HSPA5/BiP and subsequent nucleotide exchange. Interacts with EIF2AK3/PERK (via luminal domain); interaction leads to inactivate EIF2AK3/PERK. Interacts with MX1. Interacts with METTL23. Interacts with CEMIP; the interaction induces calcium leakage from the endoplasmic reticulum and cell migration. Interacts with PCSK4 form; the interaction takes place in the endoplasmic reticulum. Interacts with CIPC. Interacts with CCDC88B (via C-terminus); the interaction opposes ERN1-mediated JNK activation, protecting against apoptosis. Interacts with INPP5K; necessary for INPP5K localization at the endoplasmic reticulum. Interacts with MANF; the interaction is direct. Interacts with LOXL2; leading to activate the ERN1/IRE1-XBP1 pathway of the unfolded protein response. Interacts with CLU under stressed condition; interaction increases CLU protein stability; facilitates its retrotranslocation and redistribution to the mitochondria; cooperatively suppress stress-induced apoptosis by stabilizing mitochondrial membrane integrity. Interacts with CCDC47. Interacts with CLN3. Interacts with ELAPOR1; may regulate the function of HSPA5 in apoptosis and cell proliferation. Interacts with CASP7. Interacts with ILDR2; the interaction stabilizes ILDR2 expression. Interacts with ADAM7. In terms of processing, in unstressed cells, AMPylation at Thr-518 by FICD inactivates the chaperome activity: AMPylated form is locked in a relatively inert state and only weakly stimulated by J domain-containing proteins. In response to endoplasmic reticulum stress, de-AMPylation by the same protein, FICD, restores the chaperone activity.

The protein localises to the endoplasmic reticulum lumen. The protein resides in the melanosome. It localises to the cytoplasm. Its subcellular location is the cell surface. The catalysed reaction is ATP + H2O = ADP + phosphate + H(+). Its activity is regulated as follows. The chaperone activity is regulated by ATP-induced allosteric coupling of the nucleotide-binding (NBD) and substrate-binding (SBD) domains. In the ADP-bound and nucleotide-free (apo) states, the two domains have little interaction. In contrast, in the ATP-bound state the two domains are tightly coupled, which results in drastically accelerated kinetics in both binding and release of polypeptide substrates. J domain-containing co-chaperones (DNAJB9/ERdj4 or DNAJC10/ERdj5) stimulate the ATPase activity and are required for efficient substrate recognition by HSPA5/BiP. Homooligomerization inactivates participating HSPA5/BiP protomers and probably act as reservoirs to store HSPA5/BiP molecules when they are not needed by the cell. Endoplasmic reticulum chaperone that plays a key role in protein folding and quality control in the endoplasmic reticulum lumen. Involved in the correct folding of proteins and degradation of misfolded proteins via its interaction with DNAJC10/ERdj5, probably to facilitate the release of DNAJC10/ERdj5 from its substrate. Acts as a key repressor of the EIF2AK3/PERK and ERN1/IRE1-mediated unfolded protein response (UPR). In the unstressed endoplasmic reticulum, recruited by DNAJB9/ERdj4 to the luminal region of ERN1/IRE1, leading to disrupt the dimerization of ERN1/IRE1, thereby inactivating ERN1/IRE1. Also binds and inactivates EIF2AK3/PERK in unstressed cells. Accumulation of misfolded protein in the endoplasmic reticulum causes release of HSPA5/BiP from ERN1/IRE1 and EIF2AK3/PERK, allowing their homodimerization and subsequent activation. Plays an auxiliary role in post-translational transport of small presecretory proteins across endoplasmic reticulum (ER). May function as an allosteric modulator for SEC61 channel-forming translocon complex, likely cooperating with SEC62 to enable the productive insertion of these precursors into SEC61 channel. Appears to specifically regulate translocation of precursors having inhibitory residues in their mature region that weaken channel gating. May also play a role in apoptosis and cell proliferation. The chain is Endoplasmic reticulum chaperone BiP from Pongo abelii (Sumatran orangutan).